The primary structure comprises 186 residues: MKTSKLNFLTLVASTGLALAFLSGCTSNTGTTQSAKLYSEEELGLRKATIYNENKTLVKEFEYSKEPAGASKVYERSFENAPPMIPHDVEGMMDMSREINMCTSCHLPEVAEAAAATPMPKSHFFNMRTGEDLKGAMDEARYNCSQCHTPQANVTPLVDNRFRPEFRGEDAKNRSNLIDTLNEGVK.

The signal sequence occupies residues 1–20 (MKTSKLNFLTLVASTGLALA). 8 residues coordinate heme c: histidine 87, cysteine 102, cysteine 105, histidine 106, histidine 123, cysteine 144, cysteine 147, and histidine 148.

The protein belongs to the NapB family. As to quaternary structure, component of the periplasmic nitrate reductase NapAB complex composed of NapA and NapB. In terms of processing, binds 2 heme C groups per subunit.

It is found in the periplasm. Electron transfer subunit of the periplasmic nitrate reductase complex NapAB. Transfers electrons to NapA subunit, thus allowing electron flow between membrane and periplasm. Essential for periplasmic nitrate reduction with nitrate as the terminal electron acceptor. The chain is Periplasmic nitrate reductase, electron transfer subunit from Wolinella succinogenes (strain ATCC 29543 / DSM 1740 / CCUG 13145 / JCM 31913 / LMG 7466 / NCTC 11488 / FDC 602W) (Vibrio succinogenes).